A 391-amino-acid polypeptide reads, in one-letter code: 3-ketoacyl-CoA thiolase (391 aa).

Catalysis depends on Cys95, which acts as the Acyl-thioester intermediate. Residues His347 and Cys377 each act as proton acceptor in the active site.

It belongs to the thiolase-like superfamily. Thiolase family. Heterotetramer of two alpha chains (FadB) and two beta chains (FadA).

It is found in the cytoplasm. It catalyses the reaction an acyl-CoA + acetyl-CoA = a 3-oxoacyl-CoA + CoA. Its pathway is lipid metabolism; fatty acid beta-oxidation. In terms of biological role, catalyzes the final step of fatty acid oxidation in which acetyl-CoA is released and the CoA ester of a fatty acid two carbons shorter is formed. The chain is 3-ketoacyl-CoA thiolase from Ectopseudomonas oleovorans (Pseudomonas oleovorans).